Reading from the N-terminus, the 187-residue chain is MTKVKDEPRASVEGGCGVADGDGGAAEIGGTGSVEKSINEVRSTEIQTAEPTVPPNQLTIFFGGSVTVFDGLPSEKVQEILRIAAKAMETKNSTSISPVSSPALNRAPSFSSTSNVASPAAQPFPIQPISFCRSTADLPIARRHSLQRFLEKRRDRLVNKNPYPTSDFKKTDVPTGNVSIKEEFPTA.

Over residues 1–10 the composition is skewed to basic and acidic residues; that stretch reads MTKVKDEPRA. A disordered region spans residues 1-50; the sequence is MTKVKDEPRASVEGGCGVADGDGGAAEIGGTGSVEKSINEVRSTEIQTAE. Over residues 14 to 32 the composition is skewed to gly residues; that stretch reads GGCGVADGDGGAAEIGGTG. Positions 51–86 constitute a Tify domain; the sequence is PTVPPNQLTIFFGGSVTVFDGLPSEKVQEILRIAAK. The Jas signature appears at 139-163; the sequence is PIARRHSLQRFLEKRRDRLVNKNPY. Residues 141–148 carry the Nuclear localization signal motif; it reads ARRHSLQR. The interval 152–187 is disordered; that stretch reads KRRDRLVNKNPYPTSDFKKTDVPTGNVSIKEEFPTA.

Belongs to the TIFY/JAZ family. As to quaternary structure, interacts with MYC2, AFPH2/NINJA, TIFY10A/JAZ1, TIFY10B/JAZ2, TIFY11A/JAZ5, TIFY11B/JAZ6, TIFY5A/JAZ8 and TIFY9/JAZ10. In terms of assembly, (Microbial infection) Interacts with the pathogenic Pseudomonas syringae HopZ1a protein. (Microbial infection) Acetylated by Pseudomonas syringae HopZ1a. Post-translationally, ubiquitinated. Targeted for degradation by the SCF(COI1) E3 ubiquitin ligase-proteasome pathway during jasmonate signaling.

It localises to the nucleus. Its function is as follows. Repressor of jasmonate responses. In Arabidopsis thaliana (Mouse-ear cress), this protein is Protein TIFY 3B.